Reading from the N-terminus, the 584-residue chain is UvrABC system protein C (584 aa).

The GIY-YIG domain occupies 12 to 89 (NKPGCYLFFN…IKKYHPKYNV (78 aa)). In terms of domain architecture, UVR spans 194 to 229 (NQVKQTLVKQMQKASDNLQFEQAQRIKDQITSLDFI).

The protein belongs to the UvrC family. Interacts with UvrB in an incision complex.

It localises to the cytoplasm. The UvrABC repair system catalyzes the recognition and processing of DNA lesions. UvrC both incises the 5' and 3' sides of the lesion. The N-terminal half is responsible for the 3' incision and the C-terminal half is responsible for the 5' incision. The polypeptide is UvrABC system protein C (Mycoplasma mycoides subsp. mycoides SC (strain CCUG 32753 / NCTC 10114 / PG1)).